The following is a 485-amino-acid chain: N-succinylglutamate 5-semialdehyde dehydrogenase 2 (485 aa).

221–226 (GSAAAG) provides a ligand contact to NAD(+). Active-site residues include glutamate 244 and cysteine 279.

This sequence belongs to the aldehyde dehydrogenase family. AstD subfamily.

The enzyme catalyses N-succinyl-L-glutamate 5-semialdehyde + NAD(+) + H2O = N-succinyl-L-glutamate + NADH + 2 H(+). The protein operates within amino-acid degradation; L-arginine degradation via AST pathway; L-glutamate and succinate from L-arginine: step 4/5. In terms of biological role, catalyzes the NAD-dependent reduction of succinylglutamate semialdehyde into succinylglutamate. The chain is N-succinylglutamate 5-semialdehyde dehydrogenase 2 from Caulobacter vibrioides (strain ATCC 19089 / CIP 103742 / CB 15) (Caulobacter crescentus).